A 336-amino-acid polypeptide reads, in one-letter code: Foldase protein PrsA (336 aa).

The first 22 residues, 1 to 22, serve as a signal peptide directing secretion; that stretch reads MKSAKKLLSVLCLGIFILTFTA. The N-palmitoyl cysteine moiety is linked to residue Cys23. Residue Cys23 is the site of S-diacylglycerol cysteine attachment. A PpiC domain is found at 194–286; sequence PNTMNVSHIL…WGYHIIKVNS (93 aa).

The protein belongs to the PrsA family.

Its subcellular location is the cell membrane. It carries out the reaction [protein]-peptidylproline (omega=180) = [protein]-peptidylproline (omega=0). In terms of biological role, plays a major role in protein secretion by helping the post-translocational extracellular folding of several secreted proteins. This chain is Foldase protein PrsA, found in Clostridium botulinum (strain ATCC 19397 / Type A).